Here is a 469-residue protein sequence, read N- to C-terminus: Asparagine--tRNA ligase (469 aa).

This sequence belongs to the class-II aminoacyl-tRNA synthetase family. Homodimer.

The protein resides in the cytoplasm. It carries out the reaction tRNA(Asn) + L-asparagine + ATP = L-asparaginyl-tRNA(Asn) + AMP + diphosphate + H(+). This is Asparagine--tRNA ligase from Porphyromonas gingivalis (strain ATCC BAA-308 / W83).